The chain runs to 1057 residues: mRNA export factor elf1 (1057 aa).

2 consecutive ABC transporter domains span residues 440 to 659 (IEEE…VKPE) and 692 to 1019 (LKMT…KKKL). Residues 477–484 (GHNGCGKS) and 726–733 (GPNGAGKS) each bind ATP. Ser-733 carries the phosphoserine modification. The Chromo domain occupies 820–869 (RRVEALIGRQKLKKSFQYEIKWFGKPHKYNTWVSREILLENGFQKFVQAF). Over residues 1020–1036 (TRNEIKAKERRAREREL) the composition is skewed to basic and acidic residues. The disordered stretch occupies residues 1020-1057 (TRNEIKAKERRARERELAWLQSPKGTEKPKSFFSDDEE). 2 positions are modified to phosphoserine: Ser-1041 and Ser-1053.

The protein belongs to the ABC transporter superfamily. ABCF family. EF3 subfamily.

The protein resides in the cytoplasm. The protein localises to the nucleus. Has a direct role in the mRNA export process. Appears to act within the rae1 mediated mRNA export pathway. In Schizosaccharomyces pombe (strain 972 / ATCC 24843) (Fission yeast), this protein is mRNA export factor elf1 (elf1).